Consider the following 328-residue polypeptide: MKENFWSELPRPFFILAPMEDVTDIVFRHVVSEAARPDVFFTEFTNTESFCHPEGIHSVRGRLTFSEDEQPMVAHIWGDKPEQFRETSIQLAKMGFKGIDLNMGCPVANVAKKGKGSGLILRPDVAAEIIQATKAGGLPVSVKTRLGYYEIDEWKDWLKHVFEQDIANLSIHLRTRKEMSKVDAHWELIEAIKNLRDEIAPNTLLTINGDIPDRKTGLELAEKYGIDGVMIGRGIFHNPFAFEKEPREHTCKELLDLLRLHLSLFNKYEKDEIRQFKSLRRFFKIYVRGIRGASELRHQLMNTQSIAEARALLDEFEAQMDEDVKLEL.

18–20 (PME) lines the FMN pocket. Catalysis depends on Cys-105, which acts as the Proton donor. FMN is bound by residues Lys-143, 208-210 (NGD), and 232-233 (GR).

This sequence belongs to the Dus family. Requires FMN as cofactor.

The catalysed reaction is a 5,6-dihydrouridine in tRNA + NAD(+) = a uridine in tRNA + NADH + H(+). The enzyme catalyses a 5,6-dihydrouridine in tRNA + NADP(+) = a uridine in tRNA + NADPH + H(+). In terms of biological role, catalyzes the synthesis of 5,6-dihydrouridine (D), a modified base found in the D-loop of most tRNAs, via the reduction of the C5-C6 double bond in target uridines. The chain is Probable tRNA-dihydrouridine synthase (dus) from Staphylococcus aureus (strain MRSA252).